The chain runs to 269 residues: Tryptophan synthase alpha chain (269 aa).

Residues Glu-49 and Asp-60 each act as proton acceptor in the active site.

This sequence belongs to the TrpA family. In terms of assembly, tetramer of two alpha and two beta chains.

It catalyses the reaction (1S,2R)-1-C-(indol-3-yl)glycerol 3-phosphate + L-serine = D-glyceraldehyde 3-phosphate + L-tryptophan + H2O. It functions in the pathway amino-acid biosynthesis; L-tryptophan biosynthesis; L-tryptophan from chorismate: step 5/5. Its function is as follows. The alpha subunit is responsible for the aldol cleavage of indoleglycerol phosphate to indole and glyceraldehyde 3-phosphate. The protein is Tryptophan synthase alpha chain of Acidovorax ebreus (strain TPSY) (Diaphorobacter sp. (strain TPSY)).